A 550-amino-acid chain; its full sequence is Neuronal acetylcholine receptor subunit alpha-9-II (550 aa).

Positions 1–20 (MRKMVPVVCFATMLLQVAHS) are cleaved as a signal peptide. At 21–233 (AQGRYAQQLL…YTVLLQRRSS (213 aa)) the chain is on the extracellular side. N-linked (GlcNAc...) asparagine glycosylation is present at asparagine 52. The cysteines at positions 150 and 164 are disulfide-linked. Residue asparagine 165 is glycosylated (N-linked (GlcNAc...) asparagine). Cysteine 214 and cysteine 215 are joined by a disulfide. Helical transmembrane passes span 234 to 254 (FYIFNLLLPCFLISFLAPLGF), 264 to 284 (VSLGVTVLLALTVFQLMVAES), and 298 to 318 (YIATMTMITASTALTIFIMNI). At 319–528 (HFCGAEAKPV…WKRVAKVMDR (210 aa)) the chain is on the cytoplasmic side. The interval 357–439 (TSSSSSSSSS…HLSSSKYEGF (83 aa)) is disordered. The segment covering 358–367 (SSSSSSSSSS) has biased composition (low complexity). The segment covering 413 to 422 (RHPKPRHQHH) has biased composition (basic residues). A helical transmembrane segment spans residues 529–549 (FFMWIFFIMVFLMSILIIGKA).

This sequence belongs to the ligand-gated ion channel (TC 1.A.9) family. Acetylcholine receptor (TC 1.A.9.1) subfamily. Expressed in the brain, liver, olfactory mucosa, pituitary gland and hair cells of the saccule.

It is found in the postsynaptic cell membrane. Its subcellular location is the cell membrane. The polypeptide is Neuronal acetylcholine receptor subunit alpha-9-II (Oncorhynchus mykiss (Rainbow trout)).